The chain runs to 213 residues: Large ribosomal subunit protein uL4 (213 aa).

Residues 41–75 form a disordered region; sequence GTASTKTRAEVSRSGKKMYSQKGTGNARHGDRSVP.

The protein belongs to the universal ribosomal protein uL4 family. In terms of assembly, part of the 50S ribosomal subunit.

Its function is as follows. One of the primary rRNA binding proteins, this protein initially binds near the 5'-end of the 23S rRNA. It is important during the early stages of 50S assembly. It makes multiple contacts with different domains of the 23S rRNA in the assembled 50S subunit and ribosome. Functionally, forms part of the polypeptide exit tunnel. In Deinococcus geothermalis (strain DSM 11300 / CIP 105573 / AG-3a), this protein is Large ribosomal subunit protein uL4.